The sequence spans 146 residues: Large ribosomal subunit protein uL15 (146 aa).

Positions 1 to 18 are enriched in basic and acidic residues; it reads MKLHELKPSEGSRKERNR. The tract at residues 1-50 is disordered; the sequence is MKLHELKPSEGSRKERNRVGRGTGSGNGKTSGRGHKGQKARSGGGVRLGF. Positions 21-31 are enriched in gly residues; it reads RGTGSGNGKTS.

The protein belongs to the universal ribosomal protein uL15 family. Part of the 50S ribosomal subunit.

Its function is as follows. Binds to the 23S rRNA. The sequence is that of Large ribosomal subunit protein uL15 from Listeria innocua serovar 6a (strain ATCC BAA-680 / CLIP 11262).